The primary structure comprises 87 residues: uncharacterized protein (87 aa).

The interval 43 to 87 is disordered; sequence NQGYGQNFGDASGFMGTRSHVDDRDQIDSPASFESEAVNSSIKRK.

This is an uncharacterized protein from Bacillus subtilis (strain 168).